The sequence spans 153 residues: Transcriptional repressor NrdR (153 aa).

A zinc finger spans residues cysteine 3–cysteine 34. One can recognise an ATP-cone domain in the interval phenylalanine 49 to aspartate 139.

This sequence belongs to the NrdR family. Zn(2+) is required as a cofactor.

Functionally, negatively regulates transcription of bacterial ribonucleotide reductase nrd genes and operons by binding to NrdR-boxes. The protein is Transcriptional repressor NrdR of Ehrlichia chaffeensis (strain ATCC CRL-10679 / Arkansas).